Consider the following 140-residue polypeptide: Seminal plasma protein A3 (140 aa).

A signal peptide spans 1-25 (MALRLGLFLIWAGVSMFLQLDPVNG). Fibronectin type-II domains follow at residues 49–93 (TKDN…YCTK) and 94–140 (NDYA…WKYC). 4 cysteine pairs are disulfide-bonded: cysteine 54-cysteine 78, cysteine 68-cysteine 91, cysteine 99-cysteine 125, and cysteine 113-cysteine 140.

This sequence belongs to the seminal plasma protein family.

Its subcellular location is the secreted. Its function is as follows. The BSP-A proteins from seminal plasma exhibit both simulatory and inhibitory actions on the release of pituitary gonadotropins. The exact function of these proteins is not known. The sequence is that of Seminal plasma protein A3 from Bos taurus (Bovine).